Here is a 647-residue protein sequence, read N- to C-terminus: Threonine--tRNA ligase (647 aa).

A TGS domain is found at 1 to 63; that stretch reads MEVRVEGQMV…PAGCTGIEPV (63 aa). The segment at 244-535 is catalytic; sequence DHRKLGRELS…LVENFAGALP (292 aa). The Zn(2+) site is built by C336, H387, and H512.

It belongs to the class-II aminoacyl-tRNA synthetase family. As to quaternary structure, homodimer. It depends on Zn(2+) as a cofactor.

The protein resides in the cytoplasm. It carries out the reaction tRNA(Thr) + L-threonine + ATP = L-threonyl-tRNA(Thr) + AMP + diphosphate + H(+). Catalyzes the attachment of threonine to tRNA(Thr) in a two-step reaction: L-threonine is first activated by ATP to form Thr-AMP and then transferred to the acceptor end of tRNA(Thr). Also edits incorrectly charged L-seryl-tRNA(Thr). The polypeptide is Threonine--tRNA ligase (Desulfovibrio desulfuricans (strain ATCC 27774 / DSM 6949 / MB)).